A 286-amino-acid polypeptide reads, in one-letter code: ATP synthase gamma chain (286 aa).

Belongs to the ATPase gamma chain family. As to quaternary structure, F-type ATPases have 2 components, CF(1) - the catalytic core - and CF(0) - the membrane proton channel. CF(1) has five subunits: alpha(3), beta(3), gamma(1), delta(1), epsilon(1). CF(0) has three main subunits: a, b and c.

The protein localises to the cell inner membrane. In terms of biological role, produces ATP from ADP in the presence of a proton gradient across the membrane. The gamma chain is believed to be important in regulating ATPase activity and the flow of protons through the CF(0) complex. This is ATP synthase gamma chain from Fuscovulum blasticum (Rhodobacter blasticus).